A 520-amino-acid chain; its full sequence is Protein nucleotidyltransferase YdiU (520 aa).

Positions 108, 110, 111, 130, 142, 143, 193, and 200 each coordinate ATP. Asp269 functions as the Proton acceptor in the catalytic mechanism. Residues Asn270 and Asp279 each contribute to the Mg(2+) site. Residue Asp279 coordinates ATP.

Belongs to the SELO family. Requires Mg(2+) as cofactor. The cofactor is Mn(2+).

It carries out the reaction L-seryl-[protein] + ATP = 3-O-(5'-adenylyl)-L-seryl-[protein] + diphosphate. The enzyme catalyses L-threonyl-[protein] + ATP = 3-O-(5'-adenylyl)-L-threonyl-[protein] + diphosphate. The catalysed reaction is L-tyrosyl-[protein] + ATP = O-(5'-adenylyl)-L-tyrosyl-[protein] + diphosphate. It catalyses the reaction L-histidyl-[protein] + UTP = N(tele)-(5'-uridylyl)-L-histidyl-[protein] + diphosphate. It carries out the reaction L-seryl-[protein] + UTP = O-(5'-uridylyl)-L-seryl-[protein] + diphosphate. The enzyme catalyses L-tyrosyl-[protein] + UTP = O-(5'-uridylyl)-L-tyrosyl-[protein] + diphosphate. Functionally, nucleotidyltransferase involved in the post-translational modification of proteins. It can catalyze the addition of adenosine monophosphate (AMP) or uridine monophosphate (UMP) to a protein, resulting in modifications known as AMPylation and UMPylation. This Cupriavidus pinatubonensis (strain JMP 134 / LMG 1197) (Cupriavidus necator (strain JMP 134)) protein is Protein nucleotidyltransferase YdiU.